We begin with the raw amino-acid sequence, 439 residues long: tRNA modification GTPase MnmE (439 aa).

The (6S)-5-formyl-5,6,7,8-tetrahydrofolate site is built by R23, E80, and K120. Residues 217-365 (GLKIVIAGEP…LLTALQSHLP (149 aa)) form the TrmE-type G domain. K(+) is bound at residue N227. GTP contacts are provided by residues 227–232 (NAGKSS), 246–252 (TEVAGTT), and 271–274 (DTAG). A Mg(2+)-binding site is contributed by S231. K(+) contacts are provided by T246, V248, and T251. T252 contributes to the Mg(2+) binding site. K439 serves as a coordination point for (6S)-5-formyl-5,6,7,8-tetrahydrofolate.

This sequence belongs to the TRAFAC class TrmE-Era-EngA-EngB-Septin-like GTPase superfamily. TrmE GTPase family. In terms of assembly, homodimer. Heterotetramer of two MnmE and two MnmG subunits. K(+) serves as cofactor.

It localises to the cytoplasm. Its function is as follows. Exhibits a very high intrinsic GTPase hydrolysis rate. Involved in the addition of a carboxymethylaminomethyl (cmnm) group at the wobble position (U34) of certain tRNAs, forming tRNA-cmnm(5)s(2)U34. In Rhizobium meliloti (strain 1021) (Ensifer meliloti), this protein is tRNA modification GTPase MnmE.